The primary structure comprises 97 residues: Co-chaperonin GroES (97 aa).

The protein belongs to the GroES chaperonin family. Heptamer of 7 subunits arranged in a ring. Interacts with the chaperonin GroEL.

Its subcellular location is the cytoplasm. Its function is as follows. Together with the chaperonin GroEL, plays an essential role in assisting protein folding. The GroEL-GroES system forms a nano-cage that allows encapsulation of the non-native substrate proteins and provides a physical environment optimized to promote and accelerate protein folding. GroES binds to the apical surface of the GroEL ring, thereby capping the opening of the GroEL channel. The protein is Co-chaperonin GroES of Blochmanniella floridana.